A 98-amino-acid chain; its full sequence is Small ribosomal subunit protein bS6 (98 aa).

Belongs to the bacterial ribosomal protein bS6 family.

Functionally, binds together with bS18 to 16S ribosomal RNA. The polypeptide is Small ribosomal subunit protein bS6 (Moorella thermoacetica (strain ATCC 39073 / JCM 9320)).